The sequence spans 1165 residues: Chromosome partition protein Smc (1165 aa).

32 to 39 (PNGSGKSN) serves as a coordination point for ATP. A coiled-coil region spans residues 161–503 (AGVAEFDRKI…ETQRQVWREA (343 aa)). Residues 518-630 (QGVHGLISQL…VFRSLELARR (113 aa)) enclose the SMC hinge domain. 2 coiled-coil regions span residues 672–901 (ELAE…LQQR) and 946–1010 (DLSL…DCDT).

Belongs to the SMC family. In terms of assembly, homodimer.

The protein resides in the cytoplasm. Its function is as follows. Required for chromosome condensation and partitioning. In Gloeobacter violaceus (strain ATCC 29082 / PCC 7421), this protein is Chromosome partition protein Smc.